Reading from the N-terminus, the 234-residue chain is MNEITLFIKSSSANAERRINPQWTVSQLKTKLVPIVGTPEQYQKLTYEPASSTVPGHVFTSEEENLDLGEFKLQPLGTIVVEDTRPPHLRLDFDDLSQVDKYVMPREQYENRTDSVYAWKKRNQLGRFNPDFEASKASRQESLKRELVDLQKNLNSRCCAAGERYGTIRYIGLVPEINNDNLWVGVEFDEPVGKNDGTVSGKRYFNAKNKHGSFLRSSEVEVGDFPPEDILEGL.

The Ubiquitin-like domain occupies 4–88 (ITLFIKSSSA…IVVEDTRPPH (85 aa)). The CAP-Gly domain occupies 174 to 216 (VPEINNDNLWVGVEFDEPVGKNDGTVSGKRYFNAKNKHGSFLR). Ser-213 is subject to Phosphoserine.

This sequence belongs to the TBCB family. As to quaternary structure, binds to monomeric alpha-tubulin. Interacts with alp21.

Its subcellular location is the cytoplasm. It localises to the cytoskeleton. Its function is as follows. Required for microtubule function and cell polarity. Involved in the proper folding of alpha-tubulin. In Schizosaccharomyces pombe (strain 972 / ATCC 24843) (Fission yeast), this protein is Cell polarity protein alp11 (alp11).